The following is a 183-amino-acid chain: Ribulose bisphosphate carboxylase small subunit, chloroplastic 7 (183 aa).

The transit peptide at 1-43 (MAAAMMNKTVVVGKESVKGGVAPKVAMSRGGFLNSGIMKKDRD) directs the protein to the chloroplast.

This sequence belongs to the RuBisCO small chain family. Heterohexadecamer of 8 large and 8 small subunits.

The protein resides in the plastid. Its subcellular location is the chloroplast. Functionally, ruBisCO catalyzes two reactions: the carboxylation of D-ribulose 1,5-bisphosphate, the primary event in carbon dioxide fixation, as well as the oxidative fragmentation of the pentose substrate. Both reactions occur simultaneously and in competition at the same active site. Although the small subunit is not catalytic it is essential for maximal activity. In Acetabularia peniculus (Green alga), this protein is Ribulose bisphosphate carboxylase small subunit, chloroplastic 7.